Consider the following 491-residue polypeptide: Beta-galactosidase (491 aa).

Glutamate 209 functions as the Proton donor in the catalytic mechanism. The active-site Nucleophile is glutamate 389.

Belongs to the glycosyl hydrolase 1 family.

It catalyses the reaction Hydrolysis of terminal non-reducing beta-D-galactose residues in beta-D-galactosides.. The chain is Beta-galactosidase (bgaS) from Sulfolobus acidocaldarius (strain ATCC 33909 / DSM 639 / JCM 8929 / NBRC 15157 / NCIMB 11770).